The primary structure comprises 30 residues: Trypsin inhibitor 2 (30 aa).

3 disulfide bridges follow: Cys-3-Cys-20, Cys-10-Cys-22, and Cys-16-Cys-29.

Belongs to the protease inhibitor I7 (squash-type serine protease inhibitor) family.

Its subcellular location is the secreted. In terms of biological role, inhibits trypsin. The polypeptide is Trypsin inhibitor 2 (Luffa aegyptiaca (Sponge gourd)).